The chain runs to 321 residues: Phosphate acyltransferase (321 aa).

The protein belongs to the PlsX family. Homodimer. Probably interacts with PlsY.

The protein localises to the cytoplasm. The catalysed reaction is a fatty acyl-[ACP] + phosphate = an acyl phosphate + holo-[ACP]. It participates in lipid metabolism; phospholipid metabolism. Its function is as follows. Catalyzes the reversible formation of acyl-phosphate (acyl-PO(4)) from acyl-[acyl-carrier-protein] (acyl-ACP). This enzyme utilizes acyl-ACP as fatty acyl donor, but not acyl-CoA. This is Phosphate acyltransferase from Chlamydia trachomatis serovar L2 (strain ATCC VR-902B / DSM 19102 / 434/Bu).